Reading from the N-terminus, the 1570-residue chain is Mediator of RNA polymerase II transcription subunit 1 (1570 aa).

Short sequence motifs (LXXLL motif) lie at residues 585 to 589 (LTSLL) and 626 to 630 (LMNLL). Disordered stretches follow at residues 592-687 (TNNT…TEDD), 771-880 (SKLS…FKDF), and 922-1561 (SKTL…MDDD). Positions 675–687 (TGAEKMKNQTEDD) are enriched in basic and acidic residues. Polar residues-rich tracts occupy residues 788-801 (RDSS…STLF), 832-861 (GSPN…QSGF), and 931-942 (QETQSRSQSPLL). Positions 946–958 (LGKDRPQKQKVKE) are enriched in basic and acidic residues. Residues 961–970 (NGGGAGGGLS) show a composition bias toward gly residues. 5 stretches are compositionally biased toward low complexity: residues 1022–1035 (PTST…GTSG), 1066–1082 (SSHG…SSSS), 1089–1113 (SSLS…MKIG), 1121–1140 (SGQS…SMGK), and 1152–1161 (SSNVSNSSGS). A compositionally biased stretch (polar residues) spans 1173–1190 (MNPSLSKPNISPSHSRPS). Positions 1217-1228 (GSGGQHLSGGGS) are enriched in gly residues. The span at 1229 to 1271 (NSTTKSSSGLVSSGSLSQKPNSSSSSSSSSSSSSSSSSSSSSS) shows a compositional bias: low complexity. Polar residues predominate over residues 1276–1287 (VSQNLHGNSKGK). The span at 1308–1328 (VGTGGPGSEDPMDGGGGGGST) shows a compositional bias: gly residues. The span at 1347-1359 (PTKREKSEKDKSK) shows a compositional bias: basic and acidic residues. 2 stretches are compositionally biased toward polar residues: residues 1418 to 1433 (SQMQ…SGST) and 1441 to 1455 (PSHN…QALD). A compositionally biased stretch (low complexity) spans 1459-1469 (ESGSSSIAEKS). Residues 1494 to 1503 (KHKKHKKEKK) show a composition bias toward basic residues. A compositionally biased stretch (basic and acidic residues) spans 1504 to 1516 (RLKDKDRDREKKK). Residues 1536 to 1546 (MAMSGGSMMSS) are compositionally biased toward low complexity.

The protein belongs to the Mediator complex subunit 1 family. Component of the Mediator complex.

It localises to the nucleus. Component of the Mediator complex, a coactivator involved in the regulated transcription of nearly all RNA polymerase II-dependent genes. Mediator functions as a bridge to convey information from gene-specific regulatory proteins to the basal RNA polymerase II transcription machinery. Mediator is recruited to promoters by direct interactions with regulatory proteins and serves as a scaffold for the assembly of a functional preinitiation complex with RNA polymerase II and the general transcription factors. The sequence is that of Mediator of RNA polymerase II transcription subunit 1 (med1) from Xenopus laevis (African clawed frog).